A 393-amino-acid polypeptide reads, in one-letter code: ATP phosphoribosyltransferase regulatory subunit (393 aa).

This sequence belongs to the class-II aminoacyl-tRNA synthetase family. HisZ subfamily. Heteromultimer composed of HisG and HisZ subunits.

It is found in the cytoplasm. It participates in amino-acid biosynthesis; L-histidine biosynthesis; L-histidine from 5-phospho-alpha-D-ribose 1-diphosphate: step 1/9. In terms of biological role, required for the first step of histidine biosynthesis. May allow the feedback regulation of ATP phosphoribosyltransferase activity by histidine. The polypeptide is ATP phosphoribosyltransferase regulatory subunit (Shouchella clausii (strain KSM-K16) (Alkalihalobacillus clausii)).